The following is a 70-amino-acid chain: NAD(P)H-quinone oxidoreductase subunit L (70 aa).

2 consecutive transmembrane segments (helical) span residues 2 to 22 (IVPLLYLALAGAYLLVVPVAL) and 39 to 59 (TFMYFLVFLFFPGLLVLSPFV).

Belongs to the complex I NdhL subunit family. NDH-1 can be composed of about 15 different subunits; different subcomplexes with different compositions have been identified which probably have different functions.

It localises to the cellular thylakoid membrane. The catalysed reaction is a plastoquinone + NADH + (n+1) H(+)(in) = a plastoquinol + NAD(+) + n H(+)(out). It catalyses the reaction a plastoquinone + NADPH + (n+1) H(+)(in) = a plastoquinol + NADP(+) + n H(+)(out). Its function is as follows. NDH-1 shuttles electrons from an unknown electron donor, via FMN and iron-sulfur (Fe-S) centers, to quinones in the respiratory and/or the photosynthetic chain. The immediate electron acceptor for the enzyme in this species is believed to be plastoquinone. Couples the redox reaction to proton translocation, and thus conserves the redox energy in a proton gradient. Cyanobacterial NDH-1 also plays a role in inorganic carbon-concentration. In Trichormus variabilis (strain ATCC 29413 / PCC 7937) (Anabaena variabilis), this protein is NAD(P)H-quinone oxidoreductase subunit L.